The sequence spans 115 residues: MRFQVYILHLCFFILVVLTYLSQGQSYTTTTTTSTTEQPTFLQKIHETFKKVKENAKIHNLYIFDPPTWIYTTTTEKPVESTENFDITNRQLITVPVRCPPNYDFIKGRCREKIP.

A signal peptide spans 1–24 (MRFQVYILHLCFFILVVLTYLSQG). Positions 25-90 (QSYTTTTTTS…STENFDITNR (66 aa)) are excised as a propeptide. C99 and C110 form a disulfide bridge.

It belongs to the secapin family. Expressed in the epidermis, fat body and venom gland.

It is found in the secreted. Functionally, serine protease inhibitor which exhibits antifibrinolytic, antielastolytic and antimicrobial activities. Displays antimicrobial activity against bacteria and fungi. Likely functions in the innate immune response to microbial infection and possibly in the venom, as an antifibrinolytic agent. The recombinant form inhibits trypsin (IC(50)=80.02 nM, Ki=127.25 nM), chymotrypsin (IC(50)=393.78 nM, Ki=432.59 nM), the microbial serine proteases subtilisin A (IC(50)=379.20 nM, Ki=492.77 nM) and proteinase K (IC(50)=189.43 nM, Ki=271.76 nM), plasmin (IC(50)=457.98 nM, Ki=502.91 nM), human elastase (IC(50)=347.81 nM, Ki=469.90 nM) and porcine elastase (IC(50)=94.70 nM, Ki=125.62 nM). Does not inhibit thrombin. Binds to human plasmin and inhibits the plasmin-mediated degradation of fibrin to fibrin degradation products, indicating its role as an anti-fibrinolytic agent. Also binds to bacterial and fungal surfaces. Exhibits antimicrobial activity against the Gram-positive bacteria B.thuringiensis (MIC=4.21 uM) and P.larvae (MIC=11.13 uM), the Gram-negative bacteria E.coli (MIC=6.50 uM) and the multidrug-resistant A.baumannii (MIC=5 ug/ml, MBC=10 ug/ml), as well as against the fungus B.bassiana (IC(50)=2.57 uM). The synthetic peptide also exhibits antimicrobial activity against the Gram-positive bacterium P.larvae (MIC=41.12 uM), the Gram-negative bacterium P.aeruginosa (MIC=65.75 uM), and the fungus B.bassiana (IC(50)=44.27 uM). Is also able to prevent A.baumannii biofilm formation and eliminate established A.baumannii biofilms. In vitro, does not induce an inflammatory response and has no cytotoxic activity against mammalian cells. The polypeptide is Secapin (Apis cerana (Indian honeybee)).